A 277-amino-acid polypeptide reads, in one-letter code: NADPH-dependent 7-cyano-7-deazaguanine reductase (277 aa).

83 to 85 lines the substrate pocket; that stretch reads IES. 85-86 contacts NADPH; the sequence is SK. Residue cysteine 184 is the Thioimide intermediate of the active site. Catalysis depends on aspartate 191, which acts as the Proton donor. Position 223 to 224 (223 to 224) interacts with substrate; the sequence is HE. An NADPH-binding site is contributed by 252–253; sequence RG.

It belongs to the GTP cyclohydrolase I family. QueF type 2 subfamily. As to quaternary structure, homodimer.

The protein localises to the cytoplasm. The enzyme catalyses 7-aminomethyl-7-carbaguanine + 2 NADP(+) = 7-cyano-7-deazaguanine + 2 NADPH + 3 H(+). It participates in tRNA modification; tRNA-queuosine biosynthesis. In terms of biological role, catalyzes the NADPH-dependent reduction of 7-cyano-7-deazaguanine (preQ0) to 7-aminomethyl-7-deazaguanine (preQ1). The chain is NADPH-dependent 7-cyano-7-deazaguanine reductase from Cupriavidus pinatubonensis (strain JMP 134 / LMG 1197) (Cupriavidus necator (strain JMP 134)).